Consider the following 138-residue polypeptide: Acidic phospholipase A2 (138 aa).

Residues 1 to 16 (MRTLWIVAVLLLGVEG) form the signal peptide. 7 disulfides stabilise this stretch: Cys42/Cys131, Cys44/Cys60, Cys59/Cys111, Cys65/Cys138, Cys66/Cys104, Cys73/Cys97, and Cys91/Cys102. Ca(2+) contacts are provided by Tyr43, Gly45, and Gly47. His63 is an active-site residue. A Ca(2+)-binding site is contributed by Asp64. Asp105 is a catalytic residue.

This sequence belongs to the phospholipase A2 family. Group II subfamily. D49 sub-subfamily. In terms of assembly, homodimer. The cofactor is Ca(2+). As to expression, expressed by the venom gland.

The protein resides in the secreted. The catalysed reaction is a 1,2-diacyl-sn-glycero-3-phosphocholine + H2O = a 1-acyl-sn-glycero-3-phosphocholine + a fatty acid + H(+). Functionally, PLA2 catalyzes the calcium-dependent hydrolysis of the 2-acyl groups in 3-sn-phosphoglycerides. The polypeptide is Acidic phospholipase A2 (Crotalus atrox (Western diamondback rattlesnake)).